The chain runs to 113 residues: MAARLIAKIVFTSGTVLVRSIQMAYKQALLQAESGMGAAAGSMDVKSKMSPIEARKILGLENVETVSKEDIDKKYNELLTINDPKDGGSEYLQIKISGAKHCLHSALKEGKKI.

The tract at residues 56–108 is J-like; that stretch reads KILGLENVETVSKEDIDKKYNELLTINDPKDGGSEYLQIKISGAKHCLHSALK.

It belongs to the TIM16/PAM16 family. In terms of assembly, probable component of the PAM complex at least composed of a mitochondrial HSP70 protein, grepE, tim16 and tim14. Associates with the TIM23 complex.

The protein resides in the mitochondrion inner membrane. Its function is as follows. Regulates ATP-dependent protein translocation into the mitochondrial matrix. The chain is Mitochondrial import inner membrane translocase subunit tim16 (timm16) from Dictyostelium discoideum (Social amoeba).